Reading from the N-terminus, the 240-residue chain is ATP-dependent dethiobiotin synthetase BioD (240 aa).

An ATP-binding site is contributed by 15-20; sequence EIGKTF. Position 19 (threonine 19) interacts with Mg(2+). Residue lysine 40 is part of the active site. Residues aspartate 57, 118–121, and 178–179 each bind ATP; these read EGVG and NR. Mg(2+) contacts are provided by aspartate 57 and glutamate 118.

Belongs to the dethiobiotin synthetase family. As to quaternary structure, homodimer. Mg(2+) serves as cofactor.

Its subcellular location is the cytoplasm. The enzyme catalyses (7R,8S)-7,8-diammoniononanoate + CO2 + ATP = (4R,5S)-dethiobiotin + ADP + phosphate + 3 H(+). It functions in the pathway cofactor biosynthesis; biotin biosynthesis; biotin from 7,8-diaminononanoate: step 1/2. In terms of biological role, catalyzes a mechanistically unusual reaction, the ATP-dependent insertion of CO2 between the N7 and N8 nitrogen atoms of 7,8-diaminopelargonic acid (DAPA, also called 7,8-diammoniononanoate) to form a ureido ring. The polypeptide is ATP-dependent dethiobiotin synthetase BioD (Burkholderia pseudomallei (strain K96243)).